A 473-amino-acid polypeptide reads, in one-letter code: Ribulose bisphosphate carboxylase large chain (473 aa).

Positions 1-2 (MS) are excised as a propeptide. An N-acetylproline modification is found at Pro-3. Lys-14 bears the N6,N6,N6-trimethyllysine mark. Residues Asn-123 and Thr-173 each coordinate substrate. Lys-175 acts as the Proton acceptor in catalysis. Residue Lys-177 participates in substrate binding. Positions 201, 203, and 204 each coordinate Mg(2+). Lys-201 is subject to N6-carboxylysine. His-294 serves as the catalytic Proton acceptor. Substrate is bound by residues Arg-295, His-327, and Ser-379.

Belongs to the RuBisCO large chain family. Type I subfamily. As to quaternary structure, heterohexadecamer of 8 large chains and 8 small chains; disulfide-linked. The disulfide link is formed within the large subunit homodimers. Mg(2+) is required as a cofactor. Post-translationally, the disulfide bond which can form in the large chain dimeric partners within the hexadecamer appears to be associated with oxidative stress and protein turnover.

It is found in the plastid. The protein localises to the chloroplast. It carries out the reaction 2 (2R)-3-phosphoglycerate + 2 H(+) = D-ribulose 1,5-bisphosphate + CO2 + H2O. It catalyses the reaction D-ribulose 1,5-bisphosphate + O2 = 2-phosphoglycolate + (2R)-3-phosphoglycerate + 2 H(+). Functionally, ruBisCO catalyzes two reactions: the carboxylation of D-ribulose 1,5-bisphosphate, the primary event in carbon dioxide fixation, as well as the oxidative fragmentation of the pentose substrate in the photorespiration process. Both reactions occur simultaneously and in competition at the same active site. The chain is Ribulose bisphosphate carboxylase large chain from Ajuga chamaepitys (Yellow bugle).